Reading from the N-terminus, the 268-residue chain is Hydroxyethylthiazole kinase (268 aa).

Methionine 47 serves as a coordination point for substrate. 2 residues coordinate ATP: arginine 122 and threonine 168. Alanine 195 contacts substrate.

Belongs to the Thz kinase family. Mg(2+) is required as a cofactor.

The enzyme catalyses 5-(2-hydroxyethyl)-4-methylthiazole + ATP = 4-methyl-5-(2-phosphooxyethyl)-thiazole + ADP + H(+). Its pathway is cofactor biosynthesis; thiamine diphosphate biosynthesis; 4-methyl-5-(2-phosphoethyl)-thiazole from 5-(2-hydroxyethyl)-4-methylthiazole: step 1/1. Functionally, catalyzes the phosphorylation of the hydroxyl group of 4-methyl-5-beta-hydroxyethylthiazole (THZ). In Rhizobium rhizogenes (strain K84 / ATCC BAA-868) (Agrobacterium radiobacter), this protein is Hydroxyethylthiazole kinase.